Reading from the N-terminus, the 100-residue chain is Small ribosomal subunit protein uS14c (100 aa).

The protein belongs to the universal ribosomal protein uS14 family. In terms of assembly, part of the 30S ribosomal subunit.

It localises to the plastid. The protein localises to the chloroplast. Its function is as follows. Binds 16S rRNA, required for the assembly of 30S particles. The protein is Small ribosomal subunit protein uS14c of Staurastrum punctulatum (Green alga).